The sequence spans 516 residues: NAD(P)H-quinone oxidoreductase chain 4, chloroplastic (516 aa).

14 helical membrane-spanning segments follow: residues 4–24 (FPWL…IFLL), 37–57 (LCIC…HFQL), 87–107 (IGPI…AWPV), 111–131 (AQLF…SFSS), 134–154 (LLLF…LLSM), 167–187 (FILY…GIGL), 208–228 (ALEV…LPII), 242–262 (HYST…YGLV), 272–292 (AHCL…IYAA), 305–325 (IAYS…SLSD), 330–350 (GAIL…FLAG), 386–406 (LALP…GIIT), 416–436 (ILIA…SLSM), and 462–482 (LFVS…PDFV).

This sequence belongs to the complex I subunit 4 family.

Its subcellular location is the plastid. The protein resides in the chloroplast thylakoid membrane. It catalyses the reaction a plastoquinone + NADH + (n+1) H(+)(in) = a plastoquinol + NAD(+) + n H(+)(out). The enzyme catalyses a plastoquinone + NADPH + (n+1) H(+)(in) = a plastoquinol + NADP(+) + n H(+)(out). The protein is NAD(P)H-quinone oxidoreductase chain 4, chloroplastic of Oenothera argillicola (Appalachian evening primrose).